The chain runs to 105 residues: Large ribosomal subunit protein uL24 (105 aa).

It belongs to the universal ribosomal protein uL24 family. Part of the 50S ribosomal subunit.

In terms of biological role, one of two assembly initiator proteins, it binds directly to the 5'-end of the 23S rRNA, where it nucleates assembly of the 50S subunit. Its function is as follows. One of the proteins that surrounds the polypeptide exit tunnel on the outside of the subunit. The sequence is that of Large ribosomal subunit protein uL24 from Chromohalobacter salexigens (strain ATCC BAA-138 / DSM 3043 / CIP 106854 / NCIMB 13768 / 1H11).